The following is a 1078-amino-acid chain: Transmembrane protein 132B (1078 aa).

The Extracellular segment spans residues 1–903 (MFGAASRMDT…LTDLEIGMYA (903 aa)). N-linked (GlcNAc...) asparagine glycosylation is found at Asn343, Asn366, and Asn381. The tract at residues 834–887 (RGTPVGQEESTNKSTTPQSPMEGKNKLLKSGGPDAFTSFPTQGKSPDPNNPSDL) is disordered. Residues 841 to 852 (EESTNKSTTPQS) are compositionally biased toward polar residues. Residues 904–924 (LLCVFCLAILVFLINCVAFAW) form a helical membrane-spanning segment. The Cytoplasmic segment spans residues 925–1078 (KYRHKRFAVS…DYMESLQDQM (154 aa)).

The protein belongs to the TMEM132 family.

It localises to the membrane. This Homo sapiens (Human) protein is Transmembrane protein 132B (TMEM132B).